We begin with the raw amino-acid sequence, 307 residues long: Elongation factor Ts (307 aa).

Residues 79 to 82 are involved in Mg(2+) ion dislocation from EF-Tu; the sequence is TDFV.

This sequence belongs to the EF-Ts family.

Its subcellular location is the cytoplasm. Its function is as follows. Associates with the EF-Tu.GDP complex and induces the exchange of GDP to GTP. It remains bound to the aminoacyl-tRNA.EF-Tu.GTP complex up to the GTP hydrolysis stage on the ribosome. In Bartonella quintana (strain Toulouse) (Rochalimaea quintana), this protein is Elongation factor Ts (tsf).